Here is a 355-residue protein sequence, read N- to C-terminus: Serum paraoxonase/arylesterase 1 (355 aa).

Cys-42 and Cys-353 are disulfide-bonded. Residues Glu-53 and Asp-54 each contribute to the Ca(2+) site. The active-site Proton acceptor is His-115. Ca(2+)-binding residues include Ile-117, Asn-168, Asp-169, and Asn-224. The N-linked (GlcNAc...) asparagine glycan is linked to Asn-253. Asp-269 and Asn-270 together coordinate Ca(2+). Residues Asn-270 and Asn-324 are each glycosylated (N-linked (GlcNAc...) asparagine).

The protein belongs to the paraoxonase family. In terms of assembly, homodimer. Heterooligomer with phosphate-binding protein (HPBP). Interacts with CLU. Ca(2+) serves as cofactor. Post-translationally, glycosylated. The signal sequence is not cleaved. In terms of processing, present in two forms, form B contains a disulfide bond, form A does not. In terms of tissue distribution, plasma, associated with HDL (at protein level). Expressed in liver, but not in heart, brain, placenta, lung, skeletal muscle, kidney or pancreas.

It localises to the secreted. Its subcellular location is the extracellular space. It catalyses the reaction a phenyl acetate + H2O = a phenol + acetate + H(+). The enzyme catalyses An aryl dialkyl phosphate + H2O = dialkyl phosphate + an aryl alcohol.. The catalysed reaction is an N-acyl-L-homoserine lactone + H2O = an N-acyl-L-homoserine + H(+). In terms of biological role, hydrolyzes the toxic metabolites of a variety of organophosphorus insecticides. Capable of hydrolyzing a broad spectrum of organophosphate substrates and lactones, and a number of aromatic carboxylic acid esters. Mediates an enzymatic protection of low density lipoproteins against oxidative modification and the consequent series of events leading to atheroma formation. This Homo sapiens (Human) protein is Serum paraoxonase/arylesterase 1 (PON1).